A 1038-amino-acid chain; its full sequence is Fibronectin-binding protein A (1038 aa).

A signal peptide spans 1 to 36 (MKNNLRYGIRKHKLGAASVFLGTMIVVGMGQDKEAA). The YSIRK-G/S signaling motif signature appears at 7-18 (YGIRKHKLGAAS). The disordered stretch occupies residues 37–193 (ASEQKTTTVE…VSEVKGTDVT (157 aa)). The tract at residues 37–507 (ASEQKTTTVE…SNKADGNGKN (471 aa)) is ligand-binding A region. Residues 39 to 92 (EQKTTTVEENGNSATDNKTSETQTTATNVNHIEETQSYNATVTEQPSNATQVTT) are compositionally biased toward polar residues. Over residues 112–121 (TVKEEEKPQV) the composition is skewed to basic and acidic residues. Polar residues predominate over residues 122–164 (KETTQPQDNSGNQRQVDLTPKKVTQNQGTETQVEVAQPRTASE). Residues 174–189 (DVAEAKEASDVSEVKG) are compositionally biased toward basic and acidic residues. The fibrinogen/elastin/tropoelastin-binding stretch occupies residues 189–507 (GTDVTSKVTV…SNKADGNGKN (319 aa)). Residues 508-868 (GQIIQDNDFE…EGQQTIEEDT (361 aa)) are fibronectin-binding. The stretch at 541 to 570 (ENQDNTPLDIDYHTAIDGEGGYVDGYIETI) is one B-1 repeat. Residues 541 to 600 (ENQDNTPLDIDYHTAIDGEGGYVDGYIETIEETDSSAIDIDYHTAVDSEVGHVGGYTESS) form a 2 X approximate tandem repeats region. The B-2 repeat unit spans residues 571–600 (EETDSSAIDIDYHTAVDSEVGHVGGYTESS). Disordered stretches follow at residues 736 to 804 (LGYE…GGNI), 825 to 976 (IEED…GKVV), and 989 to 1015 (VAPT…NKGM). Residues 741 to 778 (GQNSGNQSFEEDTEEDKPKYEQGGNIVDIDFDSVPQIH) form a D-1 repeat. The segment at 741–898 (GQNSGNQSFE…TPEVPSEPET (158 aa)) is 4 X approximate tandem repeats. The D-2 repeat unit spans residues 779-816 (GQNKGDQSFEEDTEKDKPKYEHGGNIIDIDFDSVPQIH). One copy of the D-3 repeat lies at 817 to 855 (GFNKHNEIIEEDTNKDKPNYQFGGHNSVDFEEDTLPKVS). Basic and acidic residues predominate over residues 825-834 (IEEDTNKDKP). The stretch at 856–898 (GQNEGQQTIEEDTTPPTPPTPEVPSEPETPMPPTPEVPSEPET) is one D-4 repeat. Residues 870-958 (PPTPPTPEVP…PAEPGKPVPP (89 aa)) show a composition bias toward pro residues. WR repeat units follow at residues 899–912 (PTPP…EPET), 913–926 (PTPP…EPET), 927–940 (PTPP…EPET), 941–954 (PTPP…EPGK), and 955–968 (PVPP…KPSK). The 5 X tandem repeats, Pro-rich (WR) stretch occupies residues 899–968 (PTPPTPEVPS…AKEEPKKPSK (70 aa)). An LPXTG sorting signal motif is present at residues 1002–1006 (LPETG). Residue Thr1005 is modified to Pentaglycyl murein peptidoglycan amidated threonine. Positions 1006–1038 (GGEESTNKGMLFGGLFSILGLALLRRNKKNNKA) are cleaved as a propeptide — removed by sortase.

It is found in the secreted. The protein resides in the cell wall. Functionally, promotes bacterial attachment to multiple substrates, such as fibronectin (Fn), fibrinogen (Fg), elastin peptides and tropoelastin. This confers to S.aureus the ability to invade endothelial cells. Promotes adherence to and aggregation of activated platelets. The polypeptide is Fibronectin-binding protein A (fnbA) (Staphylococcus aureus (strain Mu50 / ATCC 700699)).